A 161-amino-acid chain; its full sequence is Zinc finger A20 and AN1 domain-containing stress-associated protein 4 (161 aa).

The segment at 10 to 44 adopts an A20-type zinc-finger fold; sequence PEGHRLCVNNCGFFGSSATMNLCSNCYGDLCLKQQ. Residues Cys-16, Cys-20, Cys-32, and Cys-35 each coordinate Zn(2+). Over residues 76 to 85 the composition is skewed to basic and acidic residues; it reads TTKKTEEKKP. The tract at residues 76–99 is disordered; it reads TTKKTEEKKPIQIPTEQPSPPQRP. The AN1-type zinc finger occupies 96 to 142; that stretch reads PQRPNRCTVCRKRVGLTGFMCRCGTTFCGSHRYPEVHGCTFDFKSAG. 8 residues coordinate Zn(2+): Cys-102, Cys-105, Cys-116, Cys-118, Cys-123, His-126, His-132, and Cys-134.

Functionally, may be involved in environmental stress response. The protein is Zinc finger A20 and AN1 domain-containing stress-associated protein 4 (SAP4) of Arabidopsis thaliana (Mouse-ear cress).